The chain runs to 261 residues: Sulfur carrier protein FdhD (261 aa).

Catalysis depends on cysteine 105, which acts as the Cysteine persulfide intermediate. Residue 245-250 (FIRGDR) coordinates Mo-bis(molybdopterin guanine dinucleotide).

Belongs to the FdhD family.

The protein resides in the cytoplasm. In terms of biological role, required for formate dehydrogenase (FDH) activity. Acts as a sulfur carrier protein that transfers sulfur from IscS to the molybdenum cofactor prior to its insertion into FDH. This is Sulfur carrier protein FdhD from Listeria monocytogenes serovar 1/2a (strain ATCC BAA-679 / EGD-e).